We begin with the raw amino-acid sequence, 227 residues long: Inner membrane lipoprotein SadB (227 aa).

A signal peptide spans 1–21 (MHKNGKFIPLLALGFTFFLSG). Cysteine 22 carries the N-palmitoyl cysteine lipid modification. A lipid anchor (S-diacylglycerol cysteine) is attached at cysteine 22. Positions 31-68 (VEEMKEQQKEQETKINLLEKQQKEQEAKINLLEKQQAT) form a coiled coil.

In terms of assembly, homotrimer.

It is found in the cell inner membrane. In terms of biological role, required for proper surface expression of the autotransporter adhesin SadA. Could be directly involved in the biogenesis of functionally active SadA. This Salmonella typhimurium (strain LT2 / SGSC1412 / ATCC 700720) protein is Inner membrane lipoprotein SadB.